A 2772-amino-acid chain; its full sequence is Protein DDB_G0276689 (2772 aa).

Disordered regions lie at residues 50–82, 371–415, 475–514, 612–650, 685–708, and 933–982; these read QQLK…NNNN, NLET…NGKS, LDIN…KNNL, NKNN…NNNE, LRGS…DSSL, and LVNN…NNSN. Composition is skewed to low complexity over residues 376–412, 478–514, 614–649, and 688–708; these read NNNN…NNNN, NSKN…KNNL, and SFSP…DSSL. The LRR 1 repeat unit spans residues 1065–1089; it reads LSKWILNLDDNNYNHIPFMSLVLMP. The interval 1282 to 1319 is disordered; that stretch reads NNNNIDNNNNNNNNNNNNNNNNNNNNNNNNNNNNNNNN. LRR repeat units follow at residues 1393-1416 and 1543-1567; these read LSNL…TPKN and HKDV…SFSN. Positions 1587–1619 are enriched in low complexity; the sequence is QNNNYNNNNYNNNYNNNNNNNNNNNNNNNNNNN. The segment at 1587-1622 is disordered; it reads QNNNYNNNNYNNNYNNNNNNNNNNNNNNNNNNNIDN. An LRR 4 repeat occupies 1899–1922; the sequence is LEELTKQEIGYQVLLVLPTDLQVE. 2 stretches are compositionally biased toward polar residues: residues 1999–2011 and 2073–2083; these read YVSN…NDQI and LNIVHSTSPNS. Disordered stretches follow at residues 1999-2021, 2054-2083, and 2367-2386; these read YVSN…KDKK, EISN…SPNS, and NNSS…NNNN. Residues 2414–2439 form an LRR 5 repeat; that stretch reads TTIINNIEMDKNRLDEAIYYLKKYGN.

The chain is Protein DDB_G0276689 from Dictyostelium discoideum (Social amoeba).